Reading from the N-terminus, the 65-residue chain is MEVGQAASGTDGVRERRGSSAARRRSQDEPVQSGMNGIPKHSYWLDLWLFILFDLALFIFVYLLP.

Met1 is modified (N-acetylmethionine). The segment at 1–38 (MEVGQAASGTDGVRERRGSSAARRRSQDEPVQSGMNGI) is disordered. Ser19 and Ser26 each carry phosphoserine. A helical transmembrane segment spans residues 44 to 64 (WLDLWLFILFDLALFIFVYLL).

Homooligomer. Can also form heterooligomers with other sarcoplasmic/endoplasmic reticulum calcium ATPase (SERCA) regulators ERLN, PLN, SLN and STRIT1/DWORF. Monomer. Interacts as a monomer with ATP2A2/SERCA2; the interaction results in inhibition of ATP2A2 Ca(2+) affinity.

The protein localises to the endoplasmic reticulum membrane. Functionally, inhibits the activity of the calcium ATPases ATP2A2/SERCA2 and ATP2A3/SERCA3 by decreasing their apparent affinity for Ca(2+). This chain is Sarcoplasmic/endoplasmic reticulum calcium ATPase regulator ARLN (Arln), found in Rattus norvegicus (Rat).